Reading from the N-terminus, the 120-residue chain is MFLLYEYDIFWAFLIISSAIPILAFLISGVLAPINKGPEKLSSYESGIEPMGDAWLQFRIRYYMFALVFVVFDVETVFLYPWAMSFDVLGVSVFIEALIFVLILIVGSVYAWRKGALEWS.

3 consecutive transmembrane segments (helical) span residues 9–29 (IFWAFLIISSAIPILAFLISG), 64–84 (MFALVFVVFDVETVFLYPWAM), and 88–108 (VLGVSVFIEALIFVLILIVGS).

The protein belongs to the complex I subunit 3 family. NDH is composed of at least 16 different subunits, 5 of which are encoded in the nucleus.

It is found in the plastid. It localises to the chloroplast thylakoid membrane. It carries out the reaction a plastoquinone + NADH + (n+1) H(+)(in) = a plastoquinol + NAD(+) + n H(+)(out). It catalyses the reaction a plastoquinone + NADPH + (n+1) H(+)(in) = a plastoquinol + NADP(+) + n H(+)(out). In terms of biological role, NDH shuttles electrons from NAD(P)H:plastoquinone, via FMN and iron-sulfur (Fe-S) centers, to quinones in the photosynthetic chain and possibly in a chloroplast respiratory chain. The immediate electron acceptor for the enzyme in this species is believed to be plastoquinone. Couples the redox reaction to proton translocation, and thus conserves the redox energy in a proton gradient. The chain is NAD(P)H-quinone oxidoreductase subunit 3, chloroplastic from Carica papaya (Papaya).